The chain runs to 473 residues: Ribosomal RNA small subunit methyltransferase F (473 aa).

Residues A123–K129, E147, D174, and D192 each bind S-adenosyl-L-methionine. Catalysis depends on C245, which acts as the Nucleophile.

This sequence belongs to the class I-like SAM-binding methyltransferase superfamily. RsmB/NOP family.

It is found in the cytoplasm. It catalyses the reaction cytidine(1407) in 16S rRNA + S-adenosyl-L-methionine = 5-methylcytidine(1407) in 16S rRNA + S-adenosyl-L-homocysteine + H(+). Specifically methylates the cytosine at position 1407 (m5C1407) of 16S rRNA. This Vibrio cholerae serotype O1 (strain ATCC 39315 / El Tor Inaba N16961) protein is Ribosomal RNA small subunit methyltransferase F.